Consider the following 215-residue polypeptide: Peroxiredoxin 1 (215 aa).

Positions 2-157 (KLLGEKFPSM…ILRALKALQT (156 aa)) constitute a Thioredoxin domain. C44 (cysteine sulfenic acid (-SOH) intermediate) is an active-site residue. R120 is a substrate binding site.

The protein belongs to the peroxiredoxin family. Prx6 subfamily. In terms of assembly, homodecamer. Pentamer of dimers that assemble into a ring structure.

The protein resides in the cytoplasm. The catalysed reaction is a hydroperoxide + [thioredoxin]-dithiol = an alcohol + [thioredoxin]-disulfide + H2O. Thiol-specific peroxidase that catalyzes the reduction of hydrogen peroxide and organic hydroperoxides to water and alcohols, respectively. Plays a role in cell protection against oxidative stress by detoxifying peroxides. In Caldanaerobacter subterraneus subsp. tengcongensis (strain DSM 15242 / JCM 11007 / NBRC 100824 / MB4) (Thermoanaerobacter tengcongensis), this protein is Peroxiredoxin 1.